The sequence spans 403 residues: Phosphoglycerate kinase (403 aa).

Residues 22–24 (DLN), Arg37, 60–63 (HLGR), Arg119, and Arg156 contribute to the substrate site. ATP contacts are provided by residues Lys206, Gly302, Glu333, and 359 to 362 (GGDS).

The protein belongs to the phosphoglycerate kinase family. In terms of assembly, monomer.

It localises to the cytoplasm. The catalysed reaction is (2R)-3-phosphoglycerate + ATP = (2R)-3-phospho-glyceroyl phosphate + ADP. It functions in the pathway carbohydrate degradation; glycolysis; pyruvate from D-glyceraldehyde 3-phosphate: step 2/5. The chain is Phosphoglycerate kinase from Streptomyces griseus subsp. griseus (strain JCM 4626 / CBS 651.72 / NBRC 13350 / KCC S-0626 / ISP 5235).